The primary structure comprises 224 residues: DeSI-like protein At4g17486 (224 aa).

In terms of domain architecture, PPPDE spans 26–163; sequence TPVYLNVYDL…FCNCLLPESI (138 aa). Catalysis depends on residues H51 and C125. Residues 176-201 are disordered; it reads EFSDEDESNSEASSVSDEEGSEQHLI.

Belongs to the DeSI family.

The sequence is that of DeSI-like protein At4g17486 from Arabidopsis thaliana (Mouse-ear cress).